The sequence spans 561 residues: GPI mannosyltransferase 3 (561 aa).

The next 8 helical transmembrane spans lie at 3-25 (LIYV…QTYY), 64-84 (IAGL…LLVV), 110-130 (WALF…RTLA), 155-175 (LWPA…WLPL), 195-215 (FVLI…YWHG), 246-266 (FSVG…FGVM), 275-295 (YPVS…LSAV), and 328-348 (TMLW…AWYL). N-linked (GlcNAc...) asparagine glycosylation is found at N398 and N456. Positions 525 to 546 (ENAFNRGPDSGQHEPDVHDHPP) are disordered. The span at 535–546 (GQHEPDVHDHPP) shows a compositional bias: basic and acidic residues.

This sequence belongs to the glycosyltransferase 22 family. PIGB subfamily.

It localises to the endoplasmic reticulum membrane. The protein operates within glycolipid biosynthesis; glycosylphosphatidylinositol-anchor biosynthesis. In terms of biological role, mannosyltransferase involved in glycosylphosphatidylinositol-anchor biosynthesis. Transfers the third alpha-1,2-mannose to Man2-GlcN-acyl-PI during GPI precursor assembly. The chain is GPI mannosyltransferase 3 from Drosophila melanogaster (Fruit fly).